Consider the following 409-residue polypeptide: S-adenosylmethionine synthase (409 aa).

His-15 serves as a coordination point for ATP. Asp-17 contacts Mg(2+). Glu-43 contributes to the K(+) binding site. Residues Glu-56 and Gln-100 each contribute to the L-methionine site. Residues Gln-100–Glu-110 form a flexible loop region. Residues Asp-171–Lys-173, Lys-248–Phe-249, Asp-257, Arg-263–Lys-264, Ala-280, and Lys-284 each bind ATP. Residue Asp-257 participates in L-methionine binding. An L-methionine-binding site is contributed by Lys-288.

The protein belongs to the AdoMet synthase family. Homotetramer; dimer of dimers. Mg(2+) serves as cofactor. The cofactor is K(+).

The protein localises to the cytoplasm. It catalyses the reaction L-methionine + ATP + H2O = S-adenosyl-L-methionine + phosphate + diphosphate. The protein operates within amino-acid biosynthesis; S-adenosyl-L-methionine biosynthesis; S-adenosyl-L-methionine from L-methionine: step 1/1. In terms of biological role, catalyzes the formation of S-adenosylmethionine (AdoMet) from methionine and ATP. The overall synthetic reaction is composed of two sequential steps, AdoMet formation and the subsequent tripolyphosphate hydrolysis which occurs prior to release of AdoMet from the enzyme. This Prochlorococcus marinus (strain NATL1A) protein is S-adenosylmethionine synthase.